The following is a 91-amino-acid chain: Small ribosomal subunit protein bS18 (91 aa).

This sequence belongs to the bacterial ribosomal protein bS18 family. In terms of assembly, part of the 30S ribosomal subunit. Forms a tight heterodimer with protein bS6.

Its function is as follows. Binds as a heterodimer with protein bS6 to the central domain of the 16S rRNA, where it helps stabilize the platform of the 30S subunit. This Paraburkholderia xenovorans (strain LB400) protein is Small ribosomal subunit protein bS18.